Here is a 334-residue protein sequence, read N- to C-terminus: Ornithine carbamoyltransferase (334 aa).

Residues 57–60 (STRT), Q84, R108, and 135–138 (HPTQ) each bind carbamoyl phosphate. L-ornithine contacts are provided by residues N169, D233, and 237 to 238 (SM). Carbamoyl phosphate contacts are provided by residues 275–276 (CL) and R320.

Belongs to the aspartate/ornithine carbamoyltransferase superfamily. OTCase family.

Its subcellular location is the cytoplasm. The catalysed reaction is carbamoyl phosphate + L-ornithine = L-citrulline + phosphate + H(+). Its pathway is amino-acid biosynthesis; L-arginine biosynthesis; L-arginine from L-ornithine and carbamoyl phosphate: step 1/3. Reversibly catalyzes the transfer of the carbamoyl group from carbamoyl phosphate (CP) to the N(epsilon) atom of ornithine (ORN) to produce L-citrulline. The polypeptide is Ornithine carbamoyltransferase (Vibrio vulnificus (strain YJ016)).